The primary structure comprises 417 residues: Serine hydroxymethyltransferase (417 aa).

Residues L121 and G125–L127 each bind (6S)-5,6,7,8-tetrahydrofolate. Position 229 is an N6-(pyridoxal phosphate)lysine (K229). A (6S)-5,6,7,8-tetrahydrofolate-binding site is contributed by S355 to F357.

This sequence belongs to the SHMT family. As to quaternary structure, homodimer. The cofactor is pyridoxal 5'-phosphate.

It is found in the cytoplasm. The enzyme catalyses (6R)-5,10-methylene-5,6,7,8-tetrahydrofolate + glycine + H2O = (6S)-5,6,7,8-tetrahydrofolate + L-serine. It functions in the pathway one-carbon metabolism; tetrahydrofolate interconversion. Its pathway is amino-acid biosynthesis; glycine biosynthesis; glycine from L-serine: step 1/1. In terms of biological role, catalyzes the reversible interconversion of serine and glycine with tetrahydrofolate (THF) serving as the one-carbon carrier. This reaction serves as the major source of one-carbon groups required for the biosynthesis of purines, thymidylate, methionine, and other important biomolecules. Also exhibits THF-independent aldolase activity toward beta-hydroxyamino acids, producing glycine and aldehydes, via a retro-aldol mechanism. The chain is Serine hydroxymethyltransferase from Buchnera aphidicola subsp. Schizaphis graminum (strain Sg).